A 724-amino-acid chain; its full sequence is Catalase-peroxidase (724 aa).

The tryptophyl-tyrosyl-methioninium (Trp-Tyr) (with M-252) cross-link spans 98-226; it reads WHSAGSYRLA…LAAVQMGLIY (129 aa). Residue H99 is the Proton acceptor of the active site. Residues 226–252 constitute a cross-link (tryptophyl-tyrosyl-methioninium (Tyr-Met) (with W-98)); that stretch reads YVNPEGVNGKPDPLKTAAQVRTTFARM. H267 serves as a coordination point for heme b.

The protein belongs to the peroxidase family. Peroxidase/catalase subfamily. Homodimer or homotetramer. It depends on heme b as a cofactor. Post-translationally, formation of the three residue Trp-Tyr-Met cross-link is important for the catalase, but not the peroxidase activity of the enzyme.

It carries out the reaction H2O2 + AH2 = A + 2 H2O. It catalyses the reaction 2 H2O2 = O2 + 2 H2O. Its function is as follows. Bifunctional enzyme with both catalase and broad-spectrum peroxidase activity. The protein is Catalase-peroxidase of Maricaulis maris (strain MCS10) (Caulobacter maris).